The following is a 313-amino-acid chain: Formimidoylglutamase (313 aa).

The Mn(2+) site is built by H130, D155, H157, D159, D241, and D243.

It belongs to the arginase family. It depends on Mn(2+) as a cofactor.

The enzyme catalyses N-formimidoyl-L-glutamate + H2O = formamide + L-glutamate. The protein operates within amino-acid degradation; L-histidine degradation into L-glutamate; L-glutamate from N-formimidoyl-L-glutamate (hydrolase route): step 1/1. In terms of biological role, catalyzes the conversion of N-formimidoyl-L-glutamate to L-glutamate and formamide. The sequence is that of Formimidoylglutamase from Salmonella agona (strain SL483).